A 1185-amino-acid polypeptide reads, in one-letter code: Mucin-6 (1185 aa).

Intrachain disulfides connect C1/C132 and C23/C168. Residues 1 to 169 enclose the VWFD 1 domain; it reads CSTWGGGHFS…KMDDPSEICL (169 aa). N223 carries an N-linked (GlcNAc...) (complex) asparagine glycan. The region spanning 257–312 is the TIL 1 domain; sequence CSANQIYEECGSPCIKTCSNPEYSCSSHCTYGCFCPEGTVLDDISKNRTCVHLEQC. The region spanning 350–534 is the VWFD 2 domain; it reads GRCSLEGGSF…AMERETDPCA (185 aa). Cystine bridges form between C352–C488 and C374–C533. TIL domains are found at residues 619-676 and 737-782; these read CTGN…KSHC and GATC…PEEC. The region spanning 821-993 is the VWFD 3 domain; sequence STCNLYGEGH…NSWKENPLCG (173 aa). 4 cysteine pairs are disulfide-bonded: C823–C957, C845–C992, C854–C954, and C872–C879. The N-linked (GlcNAc...) (complex) asparagine glycan is linked to N930. Residues 1160-1178 are compositionally biased toward low complexity; the sequence is PTATQPTSPSTSSASTVLT. The tract at residues 1160 to 1185 is disordered; it reads PTATQPTSPSTSSASTVLTETTNPPV.

As to quaternary structure, multimer; disulfide-linked. Post-translationally, N-glycosylated with N-acetylglucosamine (6.7%), N-acetylgalactosamine (0.6%), galactose (1.8%), mannose (4.6%), N-acetylneuraminic acid (1.0%) and sulfate-containing glycans (0.7%).

Its subcellular location is the secreted. Ovomucin, the glycoprotein responsible for the gel properties of egg white, is composed for 2 subunits, alpha-ovomucin/MUC5B and beta-ovomucin/MUC6. The chain is Mucin-6 (MUC6) from Gallus gallus (Chicken).